The chain runs to 192 residues: Adenylate kinase (192 aa).

10–15 is a binding site for ATP; sequence GAGKGT. The tract at residues 30 to 59 is NMP; the sequence is STGDMLREVIAKETEVGKKAKAIISSGALV. Residues threonine 31, arginine 36, 57 to 59, 85 to 88, and glutamine 92 each bind AMP; these read ALV and GYPR. Residues 126–142 form an LID region; the sequence is RRVQETVAAGGQVRLDD. An ATP-binding site is contributed by arginine 127. AMP is bound by residues arginine 139 and arginine 150. Residue isoleucine 178 coordinates ATP.

This sequence belongs to the adenylate kinase family. As to quaternary structure, monomer.

Its subcellular location is the cytoplasm. It carries out the reaction AMP + ATP = 2 ADP. Its pathway is purine metabolism; AMP biosynthesis via salvage pathway; AMP from ADP: step 1/1. Catalyzes the reversible transfer of the terminal phosphate group between ATP and AMP. Plays an important role in cellular energy homeostasis and in adenine nucleotide metabolism. The protein is Adenylate kinase of Bartonella tribocorum (strain CIP 105476 / IBS 506).